The chain runs to 396 residues: Tryptophan synthase beta chain (396 aa).

Lys86 carries the N6-(pyridoxal phosphate)lysine modification.

Belongs to the TrpB family. In terms of assembly, tetramer of two alpha and two beta chains. Requires pyridoxal 5'-phosphate as cofactor.

The catalysed reaction is (1S,2R)-1-C-(indol-3-yl)glycerol 3-phosphate + L-serine = D-glyceraldehyde 3-phosphate + L-tryptophan + H2O. It functions in the pathway amino-acid biosynthesis; L-tryptophan biosynthesis; L-tryptophan from chorismate: step 5/5. In terms of biological role, the beta subunit is responsible for the synthesis of L-tryptophan from indole and L-serine. The sequence is that of Tryptophan synthase beta chain from Yersinia enterocolitica serotype O:8 / biotype 1B (strain NCTC 13174 / 8081).